The sequence spans 551 residues: DEAD-box ATP-dependent RNA helicase 47, mitochondrial (551 aa).

The N-terminal 29 residues, 1–29 (MAASTSTRFLVLLKDFSAFRKISWTCAAT), are a transit peptide targeting the mitochondrion. Residues 110-138 (KSFEELGLPDSLLDSLEREGFSVPTDVQS) carry the Q motif motif. In terms of domain architecture, Helicase ATP-binding spans 141–340 (VPAIIKGHDA…KSWSHEPVLV (200 aa)). Residue 154-161 (SYTGSGKT) participates in ATP binding. Positions 274-277 (DEVD) match the DEAD box motif. A Helicase C-terminal domain is found at 397–548 (TLRRCVHALD…ELVVTEEDKA (152 aa)).

Belongs to the DEAD box helicase family. As to expression, mostly expressed in leaves and flowers, and, to a lower extent, in roots, seedlings and siliques, especially in meristematic regions.

Its subcellular location is the mitochondrion. It carries out the reaction ATP + H2O = ADP + phosphate + H(+). In terms of biological role, essential protein required during embryogenesis. Required for mitochondrial metabolism. Necessary for normal plasmodesmata (PD) development and aperture regulation. This Arabidopsis thaliana (Mouse-ear cress) protein is DEAD-box ATP-dependent RNA helicase 47, mitochondrial (RH47).